Consider the following 369-residue polypeptide: Anhydro-N-acetylmuramic acid kinase (369 aa).

An ATP-binding site is contributed by 12–19 (GTSLDGVD).

It belongs to the anhydro-N-acetylmuramic acid kinase family.

The catalysed reaction is 1,6-anhydro-N-acetyl-beta-muramate + ATP + H2O = N-acetyl-D-muramate 6-phosphate + ADP + H(+). It participates in amino-sugar metabolism; 1,6-anhydro-N-acetylmuramate degradation. It functions in the pathway cell wall biogenesis; peptidoglycan recycling. In terms of biological role, catalyzes the specific phosphorylation of 1,6-anhydro-N-acetylmuramic acid (anhMurNAc) with the simultaneous cleavage of the 1,6-anhydro ring, generating MurNAc-6-P. Is required for the utilization of anhMurNAc either imported from the medium or derived from its own cell wall murein, and thus plays a role in cell wall recycling. The protein is Anhydro-N-acetylmuramic acid kinase of Actinobacillus pleuropneumoniae serotype 5b (strain L20).